The primary structure comprises 200 residues: Holliday junction resolvase RecU (200 aa).

Thr-82, Asp-84, Glu-97, and Gln-116 together coordinate Mg(2+).

This sequence belongs to the RecU family. It depends on Mg(2+) as a cofactor.

It localises to the cytoplasm. The enzyme catalyses Endonucleolytic cleavage at a junction such as a reciprocal single-stranded crossover between two homologous DNA duplexes (Holliday junction).. Functionally, endonuclease that resolves Holliday junction intermediates in genetic recombination. Cleaves mobile four-strand junctions by introducing symmetrical nicks in paired strands. Promotes annealing of linear ssDNA with homologous dsDNA. Required for DNA repair, homologous recombination and chromosome segregation. In Streptococcus sanguinis (strain SK36), this protein is Holliday junction resolvase RecU.